Consider the following 743-residue polypeptide: F-box protein COS111 (743 aa).

An F-box domain is found at 145–191; sequence ELHIKNLPVEILDYIFYLVDDNLDYKSCMYTCKLFYFLAKPYYYENL. Disordered stretches follow at residues 224 to 257 and 311 to 330; these read IKPGYDEDEQEEGQEENAENGEEENGGGARDPQY and FSNVSSKSSRSTSSKSSSST. Over residues 229-248 the composition is skewed to acidic residues; it reads DEDEQEEGQEENAENGEEEN.

Functionally, F-box protein probably involved in ubiquitin conjugation pathway. The polypeptide is F-box protein COS111 (COS111) (Candida albicans (strain SC5314 / ATCC MYA-2876) (Yeast)).